Consider the following 215-residue polypeptide: RxLR effector protein PITG_00582 (215 aa).

The signal sequence occupies residues 1-19; it reads MLPYKTLLLALGFFFTVQC. Positions 39–51 match the RxLR-dEER motif; that stretch reads RLLRSPEKTDEER. Positions 81–149 form a coiled coil; that stretch reads VAKQAKEMSN…QNELEKLAKQ (69 aa).

This sequence belongs to the RxLR effector family.

It is found in the secreted. The protein resides in the host cell membrane. Functionally, effector that might be involved in host plant infection. This is RxLR effector protein PITG_00582 from Phytophthora infestans (strain T30-4) (Potato late blight agent).